The primary structure comprises 201 residues: Putative manganese efflux pump MntP 2 (201 aa).

Transmembrane regions (helical) follow at residues 3-23, 39-59, 65-85, 116-136, 141-161, and 176-196; these read LISVILISIGLSMDAFAVSIT, IGLFFGGFQALMPLIGWSIGI, IAALDHWIALILLSIIGGKMI, LILLAIATSIDALAVGVSFAF, IINTIVIIGSITFVICFIGVM, and ILGGVVLILIGVKIFIQHTNI.

The protein belongs to the MntP (TC 9.B.29) family.

It is found in the cell membrane. In terms of biological role, probably functions as a manganese efflux pump. This Clostridium botulinum (strain Langeland / NCTC 10281 / Type F) protein is Putative manganese efflux pump MntP 2.